A 169-amino-acid polypeptide reads, in one-letter code: Biogenesis of lysosome-related organelles complex 1 subunit 4 (169 aa).

It belongs to the BLOC1S4 family. In terms of assembly, component of the biogenesis of lysosome-related organelles complex-1 (BLOC-1) composed of Blos1, Blos2, Blos3, Blos4, Dysb, Muted, Pldn and Snapin. Interacts with Pldn.

Functionally, component of the biogenesis of lysosome-related organelles complex-1 (BLOC-1) involved in pigment granule biogenesis. The chain is Biogenesis of lysosome-related organelles complex 1 subunit 4 from Drosophila melanogaster (Fruit fly).